A 471-amino-acid polypeptide reads, in one-letter code: Putative multidrug resistance protein MdtD (471 aa).

At M1–Q11 the chain is on the periplasmic side. Residues L12–A32 form a helical membrane-spanning segment. Residues L33–H48 lie on the Cytoplasmic side of the membrane. The chain crosses the membrane as a helical span at residues M49–A69. Over D70 to N76 the chain is Periplasmic. A helical transmembrane segment spans residues I77 to T97. Residues L98 to L101 lie on the Cytoplasmic side of the membrane. A helical membrane pass occupies residues L102–M124. The Periplasmic portion of the chain corresponds to K125–T137. The chain crosses the membrane as a helical span at residues F138–V158. The Cytoplasmic segment spans residues E159–H164. A helical transmembrane segment spans residues W165–M185. Residues P186–D196 lie on the Periplasmic side of the membrane. Residues L197–S217 traverse the membrane as a helical segment. The Cytoplasmic segment spans residues K218–P224. The helical transmembrane segment at L225 to A245 threads the bilayer. The Periplasmic segment spans residues R246–T262. Residues F263–M283 form a helical membrane-spanning segment. At T284–P285 the chain is on the cytoplasmic side. The helical transmembrane segment at V286–M306 threads the bilayer. At V307–T341 the chain is on the periplasmic side. The helical transmembrane segment at L342 to L362 threads the bilayer. Topologically, residues Q363–S395 are cytoplasmic. The chain crosses the membrane as a helical span at residues M396–F416. Residues G417 to T430 lie on the Periplasmic side of the membrane. The helical transmembrane segment at V431–A451 threads the bilayer. Residues R452–Q471 lie on the Cytoplasmic side of the membrane.

Belongs to the major facilitator superfamily. TCR/Tet family.

Its subcellular location is the cell inner membrane. This chain is Putative multidrug resistance protein MdtD, found in Escherichia coli (strain SE11).